Here is a 368-residue protein sequence, read N- to C-terminus: Polynucleotide 5'-hydroxyl-kinase NOL9 (368 aa).

36-43 (GPKNSGKS) lines the ATP pocket.

This sequence belongs to the Clp1 family. NOL9/GRC3 subfamily.

The protein localises to the nucleus. The protein resides in the nucleolus. Its function is as follows. Polynucleotide 5'-kinase involved in rRNA processing. This chain is Polynucleotide 5'-hydroxyl-kinase NOL9, found in Arabidopsis thaliana (Mouse-ear cress).